The following is a 108-amino-acid chain: uncharacterized protein (108 aa).

A helical transmembrane segment spans residues 72-94 (LGLHTSVFFFLRIVCMSSAASVF).

It localises to the membrane. This is an uncharacterized protein from Saccharomyces cerevisiae (strain ATCC 204508 / S288c) (Baker's yeast).